The sequence spans 91 residues: DNA-directed RNA polymerase subunit omega (91 aa).

The protein belongs to the RNA polymerase subunit omega family. As to quaternary structure, the RNAP catalytic core consists of 2 alpha, 1 beta, 1 beta' and 1 omega subunit. When a sigma factor is associated with the core the holoenzyme is formed, which can initiate transcription.

It carries out the reaction RNA(n) + a ribonucleoside 5'-triphosphate = RNA(n+1) + diphosphate. Its function is as follows. Promotes RNA polymerase assembly. Latches the N- and C-terminal regions of the beta' subunit thereby facilitating its interaction with the beta and alpha subunits. This Pseudoalteromonas translucida (strain TAC 125) protein is DNA-directed RNA polymerase subunit omega.